Reading from the N-terminus, the 632-residue chain is tRNA uridine 5-carboxymethylaminomethyl modification enzyme MnmG (632 aa).

FAD contacts are provided by residues Gly13–Gly18, Val125, and Ser180. Residue Gly273–Phe287 coordinates NAD(+). Position 370 (Gln370) interacts with FAD.

The protein belongs to the MnmG family. As to quaternary structure, homodimer. Heterotetramer of two MnmE and two MnmG subunits. It depends on FAD as a cofactor.

The protein localises to the cytoplasm. Its function is as follows. NAD-binding protein involved in the addition of a carboxymethylaminomethyl (cmnm) group at the wobble position (U34) of certain tRNAs, forming tRNA-cmnm(5)s(2)U34. This is tRNA uridine 5-carboxymethylaminomethyl modification enzyme MnmG from Nitrosospira multiformis (strain ATCC 25196 / NCIMB 11849 / C 71).